The primary structure comprises 816 residues: H(+)/Cl(-) exchange transporter 5 (816 aa).

The disordered stretch occupies residues 1 to 26 (MAMWQGAMDNRGFQQGSFSSFQNSSS). Over 1–124 (MAMWQGAMDN…WALIHSVSDA (124 aa)) the chain is Cytoplasmic. Low complexity predominate over residues 12-25 (GFQQGSFSSFQNSS). Transmembrane regions (helical) follow at residues 125–162 (FSGWLLMLLIGLLSGSLAGLIDISAHWMTDLKEGICTG) and 208–231 (VNYFMYVLWALLFAFLAVSLVKVF). Positions 237-241 (GSGIP) match the Selectivity filter part_1 motif. Serine 238 contacts chloride. Residues 240-247 (IPEIKTIL) constitute an intramembrane region (helical). 2 helical membrane passes run 256–275 (LGKWTLVIKTITLVLAVSSG) and 281–300 (EGPLVHVACCCGNILCHCFN). The Selectivity filter part_2 motif lies at 279–283 (GKEGP). 2 intramembrane regions (helical) span residues 312–324 (VLSAAAAAGVSVA) and 328–336 (PIGGVLFSL). 5 helical membrane-spanning segments follow: residues 348 to 366 (LWRSFFAALVAAFTLRSIN), 389 to 415 (LVPFILLGIFGGLWGALFIRTNIAWCR), 422 to 442 (LGKYPVIEVLVVTAITAILAF), 498 to 518 (MWQLALTLILKIVITIFTFGM), and 523 to 542 (GLFIPSMAVGAIAGRLLGVG). The short motif at 523-527 (GLFIP) is the Selectivity filter part_3 element. A chloride-binding site is contributed by phenylalanine 525. Positions 570-584 (GLYAMVGAAACLGGV) form an intramembrane region, helical. The note=Loop between two helices intramembrane region spans 585 to 587 (TRM). Residues 588 to 599 (TVSLVVIMFELT) constitute an intramembrane region (helical). The note=Loop between two helices intramembrane region spans 600–604 (GGLEY). The chain crosses the membrane as a helical span at residues 605–622 (IVPLMAAAMTSKWVADAL). Residues 623-816 (GREGIYDAHI…NQDPDSILFN (194 aa)) are Cytoplasmic-facing. Position 628 (tyrosine 628) interacts with chloride. 2 consecutive CBS domains span residues 656–720 (MKPR…ARKK) and 752–812 (ILDL…DPDS). ATP contacts are provided by residues threonine 666, 687–689 (YSG), and 794–797 (TKKD).

Belongs to the chloride channel (TC 2.A.49) family. ClC-5/CLCN5 subfamily. As to quaternary structure, interacts with NEDD4 and NEDD4L. In terms of processing, ubiquitinated by NEDD4L in the presence of albumin; which promotes endocytosis and proteasomal degradation. As to expression, kidney. Moderately expressed in aortic vascular smooth muscle and endothelial cells, and at a slightly higher level in the coronary vascular smooth muscle.

It localises to the golgi apparatus membrane. It is found in the endosome membrane. Its subcellular location is the cell membrane. The catalysed reaction is 2 chloride(in) + H(+)(out) = 2 chloride(out) + H(+)(in). Proton-coupled chloride transporter. Functions as antiport system and exchanges chloride ions against protons. Important for normal acidification of the endosome lumen. May play an important role in renal tubular function. The CLC channel family contains both chloride channels and proton-coupled anion transporters that exchange chloride or another anion for protons. The absence of conserved gating glutamate residues is typical for family members that function as channels. This chain is H(+)/Cl(-) exchange transporter 5, found in Homo sapiens (Human).